The primary structure comprises 1783 residues: Collagen alpha-1(XXVII) chain A (1783 aa).

The N-terminal stretch at 1 to 35 (MNLATRRRVRRTSRLVAKRALLLCILLYCTSFGFT) is a signal peptide. Residues 73-235 (TTRARVTTPT…NICSAIRRQC (163 aa)) form the Laminin G-like domain. 5 disordered regions span residues 288 to 312 (SSSVRMSDGVRPKPSSTTPPPLALM), 327 to 524 (HKPS…PRTP), 553 to 744 (VGAP…APGP), 772 to 1461 (PGNM…GDIG), and 1512 to 1546 (GNPGSRGDTGNKGELGVQGPRGAPGPRGPPGLPGP). Low complexity predominate over residues 403–415 (KPTSVPKPNPTKN). Pro residues predominate over residues 436–447 (LPAPKPTVPKRP). Residues 462–494 (HTTPLTPKSTLAPNSTSKKPLPTLKSTSFTTAA) are compositionally biased toward polar residues. The triple-helical region stretch occupies residues 553–1547 (VGAPGLKGDQ…RGPPGLPGPP (995 aa)). The Collagen-like 1 domain maps to 554 to 608 (GAPGLKGDQGESGLPGPPGKPGQPGMRGPRGPPGPHGKPGRPGPTGLKGKKGDPG). Low complexity-rich tracts occupy residues 622–633 (VGLPGPVGLVGV), 651–661 (EPGEQGPVGEA), 735–744 (EPGVIGAPGP), 817–829 (PGPQGKTGEIGPS), and 861–870 (ARGLPGPRGA). Collagen-like domains follow at residues 818–873 (GPQG…AAGR) and 845–902 (GKPG…GALG). Residues 926–935 (GFIGPGGEAG) are compositionally biased toward gly residues. Over residues 967–976 (GGPPGPPGSP) the composition is skewed to pro residues. Composition is skewed to low complexity over residues 978–988 (SPGSRGPIGIR) and 1098–1129 (SIGLAGNAGAAGLIGARGEPGLEGEAGPAGPD). In terms of domain architecture, Collagen-like 4 spans 986 to 1043 (GIRGPKGRRGPRGPDGVPGEIGTEGKKGPDGPPGKIGFPGHAGKIGESGEVGPKGFPG). Composition is skewed to basic and acidic residues over residues 1131–1158 (TKGEKGDMGTEGEQGVRGDPGIKGKDGP), 1170–1182 (PEGKSGKSGERGK), and 1257–1267 (AKGEQGDDGKV). In terms of domain architecture, Collagen-like 5 spans 1269–1326 (GPTGAPGLRGPVGKRGDRGEPGDPGYVGQQGVDGLRGKPGAPGLPGDPGPRGTQGPKG). Low complexity-rich tracts occupy residues 1334 to 1349 (KGKQGQQGERGSRGSP) and 1396 to 1409 (LPGKPGAPGKVGVI). Collagen-like domains lie at 1446 to 1503 (GPQG…GLAG) and 1497 to 1549 (GRGG…PPGI). Over residues 1537–1546 (PRGPPGLPGP) the composition is skewed to pro residues. A propeptide spans 1551–1783 (LAMNQDFGLG…HLEVGPVCFL (233 aa)) (C-terminal propeptide). Residues 1589-1783 (PEILRTLDYL…HLEVGPVCFL (195 aa)) form the Fibrillar collagen NC1 domain. Disulfide bonds link C1619–C1651, C1660–C1781, and C1696–C1734. D1637, N1639, C1642, and D1645 together coordinate Ca(2+). The N-linked (GlcNAc...) asparagine glycan is linked to N1698.

Belongs to the fibrillar collagen family. As to expression, expressed dynamically in the notochord from late epiboly, spreading to the anterior notochord by 24 hpf, and then throughout the notochord by 30 hpf. Subsequently, notochordal expression becomes restricted to the distal tip of the tail by 48 hpf and is no longer detectable by 72 hpf. Also expressed throughout the floor plate and hypochord at 24 hpf, and in forming head cartilages and the first forming tooth.

It localises to the secreted. It is found in the extracellular space. The protein localises to the extracellular matrix. In terms of biological role, may play a role during the calcification of cartilage and the transition of cartilage to bone. Together with col27a1b, plays a role in development of the notochord and axial skeleton. This chain is Collagen alpha-1(XXVII) chain A, found in Danio rerio (Zebrafish).